The following is a 381-amino-acid chain: Cyclic AMP-AMP-GMP synthase (381 aa).

Positions 51, 53, 56, 69, 71, and 109 each coordinate ATP. Active-site residues include Asp69 and Asp71. Asp69 and Asp71 together coordinate Mg(2+). Asp121 is a catalytic residue. Positions 121 and 196 each coordinate Mg(2+). ATP is bound by residues Asp196, Arg197, Arg204, Thr205, Gln210, Lys233, and Tyr250. The Mg(2+) site is built by Asn258 and Leu260. ATP contacts are provided by Val304 and Arg307. Residues 348–381 (GSKFPLPGPQGGDRNGGFTTPSKPAEPQKTGRFA) are disordered.

This sequence belongs to the CD-NTase family. D02 subfamily. Monomer. Crystallizes as a Cap2 homodimer bound on each side by a CdnD monomer. It depends on Mg(2+) as a cofactor. Post-translationally, in bacteria expressing cap4-dncV-cap2-cap3, this protein is conjugated to a number of other proteins by Cap2, probably via this protein's C-terminal Ala residue. More conjugated DncV is found in the absence of Cap3.

The enzyme catalyses GTP + 2 ATP = 3',3',3'-cAAG + 3 diphosphate. With respect to regulation, primed for activation by Cap2 which conjugates it to cellular proteins; activation is target protein-specific (green fluorescent protein does not activate the enzyme), but which protein(s) activate it is unclear. Cyclic nucleotide synthase (second messenger synthase) of a CBASS antivirus system. CBASS (cyclic oligonucleotide-based antiphage signaling system) provides immunity against bacteriophages. The CD-NTase protein (CdnD, this protein) synthesizes cyclic nucleotides in response to infection; these serve as specific second messenger signals. The signals activate a diverse range of effectors, leading to bacterial cell death and thus abortive phage infection. A type II-C(AAG) CBASS system. Functionally, cyclic trinucleotide synthase that catalyzes the synthesis of 3',3',3'-cyclic AMP-AMP-GMP (cAAG) as the major product, a second messenger for cell signal transduction. Uses ATP as the first donor nucleotide, followed by GTP. Its function is as follows. Protects E.coli against phage T2 infection. When the cdnD-cap2-cap3-cap4 operon is introduced in E.coli there is a more than 10(3) decrease in the efficiency of T2 plaque formation. The operon does not protect against phage T5 and only about 10-fold against T7. Expression of cdnD-cap4 alone protects E.coli against phage T2 infection. The chain is Cyclic AMP-AMP-GMP synthase from Enterobacter hormaechei subsp. hoffmannii (strain UCI 50).